The sequence spans 749 residues: Amyloid-beta A4 precursor protein-binding family A member 2 (749 aa).

3 disordered regions span residues 1-94 (MAHR…PEEE), 130-220 (DTDE…GDLE), and 238-344 (SMTS…NIPE). Ser11 bears the Phosphoserine mark. Residues 70 to 80 (GDSSSDYVNNT) are compositionally biased toward polar residues. Composition is skewed to acidic residues over residues 81-94 (SEEE…PEEE) and 131-142 (TDECQEAVEEWT). The tract at residues 185–270 (HYCASKEGYQ…SVEACPPIKA (86 aa)) is STXBP1-binding. Position 208 is a phosphoserine (Ser208). Positions 238–247 (SMTSITSASE) are enriched in polar residues. The segment covering 305–315 (RTPEERLKWPH) has biased composition (basic and acidic residues). The region spanning 368-555 (DGIIFAANYL…IINTQEMYND (188 aa)) is the PID domain. PDZ domains are found at residues 568–654 (ELQL…IVSC) and 659–734 (TVLI…TMPA).

Part of a multimeric complex containing STXBP1 and syntaxin-1. Binds to the cytoplasmic domain of amyloid-beta protein, and to the nuclear factor NF-kappa-B/p65 via its PDZ domain. Interacts with the N-terminal domain of NECAB3. As to expression, brain.

Its function is as follows. Putative function in synaptic vesicle exocytosis by binding to STXBP1, an essential component of the synaptic vesicle exocytotic machinery. May modulate processing of the amyloid-beta precursor protein (APP) and hence formation of APP-beta. This is Amyloid-beta A4 precursor protein-binding family A member 2 (APBA2) from Homo sapiens (Human).